Consider the following 335-residue polypeptide: Glyceraldehyde-3-phosphate dehydrogenase (335 aa).

Residues 13-14 (TI) and glycine 111 each bind NAD(+). 140–142 (SCN) is a D-glyceraldehyde 3-phosphate binding site. Cysteine 141 serves as the catalytic Nucleophile. Arginine 169 contributes to the NAD(+) binding site. D-glyceraldehyde 3-phosphate-binding positions include threonine 171 and 195–196 (HG). Position 300 (glutamine 300) interacts with NAD(+).

This sequence belongs to the glyceraldehyde-3-phosphate dehydrogenase family. Homotetramer.

It localises to the cytoplasm. The catalysed reaction is D-glyceraldehyde 3-phosphate + phosphate + NADP(+) = (2R)-3-phospho-glyceroyl phosphate + NADPH + H(+). It catalyses the reaction D-glyceraldehyde 3-phosphate + phosphate + NAD(+) = (2R)-3-phospho-glyceroyl phosphate + NADH + H(+). It functions in the pathway carbohydrate degradation; glycolysis; pyruvate from D-glyceraldehyde 3-phosphate: step 1/5. In Methanosarcina mazei (strain ATCC BAA-159 / DSM 3647 / Goe1 / Go1 / JCM 11833 / OCM 88) (Methanosarcina frisia), this protein is Glyceraldehyde-3-phosphate dehydrogenase.